Here is a 204-residue protein sequence, read N- to C-terminus: Probable nicotinate-nucleotide adenylyltransferase (204 aa).

It belongs to the NadD family.

It carries out the reaction nicotinate beta-D-ribonucleotide + ATP + H(+) = deamido-NAD(+) + diphosphate. The protein operates within cofactor biosynthesis; NAD(+) biosynthesis; deamido-NAD(+) from nicotinate D-ribonucleotide: step 1/1. Functionally, catalyzes the reversible adenylation of nicotinate mononucleotide (NaMN) to nicotinic acid adenine dinucleotide (NaAD). The polypeptide is Probable nicotinate-nucleotide adenylyltransferase (Dehalococcoides mccartyi (strain CBDB1)).